Reading from the N-terminus, the 250-residue chain is Triosephosphate isomerase (250 aa).

Substrate is bound at residue 9-11 (NWK). The Electrophile role is filled by H95. The active-site Proton acceptor is E167. Substrate-binding positions include G173, S213, and 234–235 (GG).

This sequence belongs to the triosephosphate isomerase family. In terms of assembly, homodimer.

Its subcellular location is the cytoplasm. The catalysed reaction is D-glyceraldehyde 3-phosphate = dihydroxyacetone phosphate. It participates in carbohydrate biosynthesis; gluconeogenesis. The protein operates within carbohydrate degradation; glycolysis; D-glyceraldehyde 3-phosphate from glycerone phosphate: step 1/1. Functionally, involved in the gluconeogenesis. Catalyzes stereospecifically the conversion of dihydroxyacetone phosphate (DHAP) to D-glyceraldehyde-3-phosphate (G3P). This is Triosephosphate isomerase from Chloroflexus aurantiacus (strain ATCC 29366 / DSM 635 / J-10-fl).